An 85-amino-acid polypeptide reads, in one-letter code: U4-theraphotoxin-Hhn1t (85 aa).

An N-terminal signal peptide occupies residues 1–22; that stretch reads MKVTLIAILTCAAVLVLHTTAA. A propeptide spanning residues 23–48 is cleaved from the precursor; it reads EELEAESQLMEVGMPDTELAAVDEER. 3 cysteine pairs are disulfide-bonded: C52/C66, C56/C77, and C71/C82.

This sequence belongs to the neurotoxin 12 (Hwtx-2) family. 02 (Hwtx-2) subfamily. Expressed by the venom gland.

Its subcellular location is the secreted. In terms of biological role, postsynaptic neurotoxin. The polypeptide is U4-theraphotoxin-Hhn1t (Cyriopagopus hainanus (Chinese bird spider)).